A 431-amino-acid polypeptide reads, in one-letter code: 4-hydroxy-3-methylbut-2-en-1-yl diphosphate synthase (flavodoxin) (431 aa).

Residues 1 to 12 (MNKLENPLRDDV) are compositionally biased toward basic and acidic residues. The disordered stretch occupies residues 1-20 (MNKLENPLRDDVAGPAPRHQ). The [4Fe-4S] cluster site is built by Cys-310, Cys-313, Cys-356, and Glu-363.

Belongs to the IspG family. [4Fe-4S] cluster is required as a cofactor.

It catalyses the reaction (2E)-4-hydroxy-3-methylbut-2-enyl diphosphate + oxidized [flavodoxin] + H2O + 2 H(+) = 2-C-methyl-D-erythritol 2,4-cyclic diphosphate + reduced [flavodoxin]. The protein operates within isoprenoid biosynthesis; isopentenyl diphosphate biosynthesis via DXP pathway; isopentenyl diphosphate from 1-deoxy-D-xylulose 5-phosphate: step 5/6. Functionally, converts 2C-methyl-D-erythritol 2,4-cyclodiphosphate (ME-2,4cPP) into 1-hydroxy-2-methyl-2-(E)-butenyl 4-diphosphate. The protein is 4-hydroxy-3-methylbut-2-en-1-yl diphosphate synthase (flavodoxin) of Rhodopseudomonas palustris (strain TIE-1).